We begin with the raw amino-acid sequence, 583 residues long: Zinc finger protein 277 (583 aa).

2 C2H2-type zinc fingers span residues 351 to 375 and 482 to 508; these read LQCL…KKQH and HQCK…DTKH.

Belongs to the ZNF277 family. Interacts (via zinc-finger domains) with RPS2/40S ribosomal protein S2, perhaps as nascent RPS2 is synthesized during translation; the interaction is direct; the interaction is extra-ribosomal. Interaction with RPS2 competes with the binding of RPS2 to protein arginine methyltransferase PRMT3. Interacts with Polycomb group (PcG) complex protein BMI1. May be part of a complex including at least ZNF277, BMI1 and RNF2/RING2.

The protein resides in the nucleus. It is found in the cytoplasm. The protein localises to the nucleolus. It localises to the chromosome. In terms of biological role, probable transcription factor. Involved in modulation of cellular senescence; represses transcription of the tumor suppressor gene INK4A/ARF, perhaps acting via the Polycomb group (PcG) complex PRC1. The sequence is that of Zinc finger protein 277 from Mus musculus (Mouse).